We begin with the raw amino-acid sequence, 1775 residues long: Atrochrysone carboxylic acid synthase (1775 aa).

Positions 29–258 are N-terminal acylcarrier protein transacylase domain (SAT); sequence RSQSKTESGW…QLPVYGGLCH (230 aa). In terms of domain architecture, Ketosynthase family 3 (KS3) spans 391–821; sequence DSSIAIVGMA…GGNTSLLIEE (431 aa). Residues Cys564, His699, and His740 each act as for beta-ketoacyl synthase activity in the active site. Positions 921–1241 are malonyl-CoA:ACP transacylase (MAT) domain; sequence FVFSGQGSFY…MAQLHNLGVD (321 aa). A product template (PT) domain region spans residues 1305–1626; the sequence is TSLVHRLVCE…RSLINTFFSP (322 aa). Residues 1309-1455 form an N-terminal hotdog fold region; sequence HRLVCESVQE…WLEEWSPMTH (147 aa). In terms of domain architecture, PKS/mFAS DH spans 1309–1621; it reads HRLVCESVQE…FRTFPRSLIN (313 aa). His1341 acts as the Proton acceptor; for dehydratase activity in catalysis. Residues 1472-1621 are C-terminal hotdog fold; it reads TANRLSRDMV…FRTFPRSLIN (150 aa). The active-site Proton donor; for dehydratase activity is the Asp1532. A disordered region spans residues 1672–1694; that stretch reads SRTVMDSSDSSPATTLTPPTLPS. The span at 1677–1689 shows a compositional bias: low complexity; that stretch reads DSSDSSPATTLTP. Positions 1698-1775 constitute a Carrier domain; it reads STESPIVHRA…DLKAWLIDYC (78 aa). Ser1735 carries the post-translational modification O-(pantetheine 4'-phosphoryl)serine.

As to expression, endocrocin is specifically produced in conidia.

The enzyme catalyses holo-[ACP] + 8 malonyl-CoA + 8 H(+) = atrochrysone carboxyl-[ACP] + 8 CO2 + 8 CoA + 2 H2O. It functions in the pathway secondary metabolite biosynthesis. Its function is as follows. Non-reducing polyketide synthase; part of the gene cluster that mediates the biosynthesis of endocrocin, a simple anthraquinone interesting for many biotechnological applications. The pathway begins with the synthesis of atrochrysone thioester by the polyketide synthase (PKS) encA. The atrochrysone carboxyl ACP thioesterase encB then breaks the thioester bond and releases the atrochrysone carboxylic acid from encA. The atrochrysone carboxylic acid is then converted to endocrocin anthrone which is further oxidized into endocrocin by the anthrone oxygenase encC. The exact function of encD has not been identified yet, but it negatively regulates endocrocin production, likely through the modification of endocrocin itself. This Aspergillus fumigatus (strain ATCC MYA-4609 / CBS 101355 / FGSC A1100 / Af293) (Neosartorya fumigata) protein is Atrochrysone carboxylic acid synthase.